Here is a 184-residue protein sequence, read N- to C-terminus: Photosystem I assembly protein Ycf4 (184 aa).

2 helical membrane-spanning segments follow: residues 22 to 42 (FCWAFILFLGSLGFLLVGTSS) and 57 to 77 (IIFFPQGIVMSFYGIAGLFIS).

This sequence belongs to the Ycf4 family.

It is found in the plastid. The protein localises to the chloroplast thylakoid membrane. Seems to be required for the assembly of the photosystem I complex. This is Photosystem I assembly protein Ycf4 from Olimarabidopsis pumila (Dwarf rocket).